The following is a 270-amino-acid chain: Formamidopyrimidine-DNA glycosylase (270 aa).

The active-site Schiff-base intermediate with DNA is the Pro-2. Glu-3 functions as the Proton donor in the catalytic mechanism. Catalysis depends on Lys-57, which acts as the Proton donor; for beta-elimination activity. DNA-binding residues include His-90, Arg-109, and Lys-150. The FPG-type zinc-finger motif lies at 235-269; that stretch reads QIYGKKGCPCPKCGQKIESFTVGQRNSYVCLHCQK. Residue Arg-259 is the Proton donor; for delta-elimination activity of the active site.

Belongs to the FPG family. Monomer. Zn(2+) is required as a cofactor.

The enzyme catalyses Hydrolysis of DNA containing ring-opened 7-methylguanine residues, releasing 2,6-diamino-4-hydroxy-5-(N-methyl)formamidopyrimidine.. It carries out the reaction 2'-deoxyribonucleotide-(2'-deoxyribose 5'-phosphate)-2'-deoxyribonucleotide-DNA = a 3'-end 2'-deoxyribonucleotide-(2,3-dehydro-2,3-deoxyribose 5'-phosphate)-DNA + a 5'-end 5'-phospho-2'-deoxyribonucleoside-DNA + H(+). In terms of biological role, involved in base excision repair of DNA damaged by oxidation or by mutagenic agents. Acts as a DNA glycosylase that recognizes and removes damaged bases. Has a preference for oxidized purines, such as 7,8-dihydro-8-oxoguanine (8-oxoG). Has AP (apurinic/apyrimidinic) lyase activity and introduces nicks in the DNA strand. Cleaves the DNA backbone by beta-delta elimination to generate a single-strand break at the site of the removed base with both 3'- and 5'-phosphates. In Actinobacillus succinogenes (strain ATCC 55618 / DSM 22257 / CCUG 43843 / 130Z), this protein is Formamidopyrimidine-DNA glycosylase.